The primary structure comprises 377 residues: Guanine nucleotide-binding protein subunit beta-1 (377 aa).

WD repeat units follow at residues 63 to 93, 105 to 135, 154 to 185, 202 to 233, 246 to 276, 293 to 323, and 339 to 369; these read GHTG…IVWN, LPCA…SIFN, GHKG…VLWD, GHTA…RLWD, GHEG…RLFD, GDIP…YVWD, and SHEG…KIWA.

This sequence belongs to the WD repeat G protein beta family. G proteins are composed of 3 units, alpha, beta and gamma.

Guanine nucleotide-binding proteins (G proteins) are involved as a modulator or transducer in various transmembrane signaling systems. The beta and gamma chains are required for the GTPase activity, for replacement of GDP by GTP, and for G protein-effector interaction. This chain is Guanine nucleotide-binding protein subunit beta-1, found in Nicotiana tabacum (Common tobacco).